We begin with the raw amino-acid sequence, 433 residues long: Gamma-glutamyl phosphate reductase (433 aa).

Belongs to the gamma-glutamyl phosphate reductase family.

It localises to the cytoplasm. It carries out the reaction L-glutamate 5-semialdehyde + phosphate + NADP(+) = L-glutamyl 5-phosphate + NADPH + H(+). The protein operates within amino-acid biosynthesis; L-proline biosynthesis; L-glutamate 5-semialdehyde from L-glutamate: step 2/2. Functionally, catalyzes the NADPH-dependent reduction of L-glutamate 5-phosphate into L-glutamate 5-semialdehyde and phosphate. The product spontaneously undergoes cyclization to form 1-pyrroline-5-carboxylate. The polypeptide is Gamma-glutamyl phosphate reductase (Psychrobacter cryohalolentis (strain ATCC BAA-1226 / DSM 17306 / VKM B-2378 / K5)).